Here is a 256-residue protein sequence, read N- to C-terminus: 5-oxoprolinase subunit A 1 (256 aa).

This sequence belongs to the LamB/PxpA family. As to quaternary structure, forms a complex composed of PxpA, PxpB and PxpC.

It catalyses the reaction 5-oxo-L-proline + ATP + 2 H2O = L-glutamate + ADP + phosphate + H(+). Catalyzes the cleavage of 5-oxoproline to form L-glutamate coupled to the hydrolysis of ATP to ADP and inorganic phosphate. This chain is 5-oxoprolinase subunit A 1, found in Pseudomonas syringae pv. tomato (strain ATCC BAA-871 / DC3000).